A 129-amino-acid polypeptide reads, in one-letter code: Histone H3-like centromeric protein A (129 aa).

The span at methionine 1–proline 14 shows a compositional bias: basic residues. Positions methionine 1–lysine 30 are disordered. A N,N,N-trimethylglycine modification is found at glycine 2. Residues serine 16, serine 22, and serine 57 each carry the phosphoserine modification. An H3-like region spans residues lysine 30–glycine 129. The segment at cysteine 64 to alanine 105 is CATD.

This sequence belongs to the histone H3 family. Component of centromeric nucleosomes, where DNA is wrapped around a histone octamer core. The octamer contains two molecules each of H2A, H2B, CENPA and H4 assembled in one CENPA-H4 heterotetramer and two H2A-H2B heterodimers. CENPA modulates the DNA-binding characteristics of nucleosomes so that protruding DNA ends have higher flexibility than in nucleosomes containing conventional histone H3. Inhibits binding of histone H1 to nucleosomes, since histone H1 binds preferentially to rigid DNA linkers that protrude from nucleosomes. Nucleosomes containing CENPA also contain histone H2A variants such as MACROH2A and H2A.Z/H2AZ1. The CENPA-H4 heterotetramer is more compact and structurally more rigid than corresponding H3-H4 heterotetramers. Can assemble into nucleosomes that contain both CENPA and histone H3.3; these nucleosomes interact with a single CENPC chain. Heterotrimer composed of HJURP, CENPA and histone H4, where HJURP interacts with the dimer formed by CENPA and histone H4 and prevents tetramerization of CENPA and H4. Component of the CENPA-NAC complex, at least composed of CENPA, CENPC, CENPH, CENPM, CENPN, CENPT and CENPU. Interacts (via CATD domain) with HJURP; the interaction is direct and is required for its localization to centromeres. Interacts with CENPC, CENPN and CENPT; interaction is direct. Part of a centromere complex consisting of CENPA, CENPT and CENPW. Identified in centromere complexes containing histones H2A, H2B and H4, and at least CENPA, CENPB, CENPC, CENPT, CENPN, HJURP, SUPT16H, SSRP1 and RSF1. Can self-associate. The CENPA-H4 heterotetramer can bind DNA by itself (in vitro). Interacts with CDK1, PPP1CA and RBBP7. Trimethylated by NTMT1 at the N-terminal glycine after cleavage of Met-1. Methylation is low before incorporation into nucleosomes and increases with cell cycle progression, with the highest levels in mitotic nucleosomes. In terms of processing, phosphorylated by CDK1 at Ser-57 during early mitosis; this abolishes association with chromatin and centromeres, prevents interaction with HJURP and thereby prevents premature assembly of CENPA into centromeres. Dephosphorylated at Ser-57 by PPP1CA during late mitosis. Post-translationally, poly-ADP-ribosylated by PARP1.

Its subcellular location is the nucleus. The protein localises to the chromosome. It localises to the centromere. Functionally, histone H3-like nucleosomal protein that is specifically found in centromeric nucleosomes. Replaces conventional H3 in the nucleosome core of centromeric chromatin that serves as an assembly site for the inner kinetochore. The presence of CENPA subtly modifies the nucleosome structure and the way DNA is wrapped around the nucleosome and gives rise to protruding DNA ends that are less well-ordered and rigid compared to nucleosomes containing histone H3. May serve as an epigenetic mark that propagates centromere identity through replication and cell division. Required for recruitment and assembly of kinetochore proteins, and as a consequence required for progress through mitosis, chromosome segregation and cytokinesis. This is Histone H3-like centromeric protein A (CENPA) from Cricetulus griseus (Chinese hamster).